We begin with the raw amino-acid sequence, 202 residues long: Superoxide dismutase [Fe] (202 aa).

Positions 27, 82, 164, and 168 each coordinate Fe cation.

The protein belongs to the iron/manganese superoxide dismutase family. As to quaternary structure, homodimer. Fe cation serves as cofactor.

The enzyme catalyses 2 superoxide + 2 H(+) = H2O2 + O2. In terms of biological role, destroys superoxide anion radicals which are normally produced within the cells and which are toxic to biological systems. The polypeptide is Superoxide dismutase [Fe] (sodA) (Enterococcus faecalis (strain ATCC 700802 / V583)).